We begin with the raw amino-acid sequence, 297 residues long: Coatomer subunit epsilon-2 (297 aa).

It belongs to the COPE family. In terms of assembly, oligomeric complex that consists of at least the alpha, beta, beta', gamma, delta, epsilon and zeta subunits.

It is found in the cytoplasm. It localises to the golgi apparatus membrane. The protein localises to the cytoplasmic vesicle. Its subcellular location is the COPI-coated vesicle membrane. In terms of biological role, the coatomer is a cytosolic protein complex that binds to dilysine motifs and reversibly associates with Golgi non-clathrin-coated vesicles, which further mediate biosynthetic protein transport from the ER, via the Golgi up to the trans Golgi network. The coatomer complex is required for budding from Golgi membranes, and is essential for the retrograde Golgi-to-ER transport of dilysine-tagged proteins. In Oryza sativa subsp. indica (Rice), this protein is Coatomer subunit epsilon-2.